We begin with the raw amino-acid sequence, 549 residues long: Pyrophosphate--fructose 6-phosphate 1-phosphotransferase (549 aa).

G78 provides a ligand contact to diphosphate. Residue D172 coordinates Mg(2+). Substrate contacts are provided by residues 200–202 (TID), 239–240 (KY), 247–249 (MGR), E308, and 421–424 (YEGR). D202 serves as the catalytic Proton acceptor.

The protein belongs to the phosphofructokinase type A (PFKA) family. PPi-dependent PFK group II subfamily. Clade 'Long' sub-subfamily. In terms of assembly, homodimer. Requires Mg(2+) as cofactor.

It is found in the cytoplasm. It catalyses the reaction beta-D-fructose 6-phosphate + diphosphate = beta-D-fructose 1,6-bisphosphate + phosphate + H(+). It functions in the pathway carbohydrate degradation; glycolysis; D-glyceraldehyde 3-phosphate and glycerone phosphate from D-glucose: step 3/4. With respect to regulation, non-allosteric. Catalyzes the phosphorylation of D-fructose 6-phosphate, the first committing step of glycolysis. Uses inorganic phosphate (PPi) as phosphoryl donor instead of ATP like common ATP-dependent phosphofructokinases (ATP-PFKs), which renders the reaction reversible, and can thus function both in glycolysis and gluconeogenesis. Consistently, PPi-PFK can replace the enzymes of both the forward (ATP-PFK) and reverse (fructose-bisphosphatase (FBPase)) reactions. The polypeptide is Pyrophosphate--fructose 6-phosphate 1-phosphotransferase (Porphyromonas gingivalis (Bacteroides gingivalis)).